Consider the following 31-residue polypeptide: Cytochrome b6-f complex subunit 6 (31 aa).

The chain crosses the membrane as a helical span at residues 4-26 (ITSYFGFLLAALTVTSALFIGLS).

It belongs to the PetL family. The 4 large subunits of the cytochrome b6-f complex are cytochrome b6, subunit IV (17 kDa polypeptide, PetD), cytochrome f and the Rieske protein, while the 4 small subunits are PetG, PetL, PetM and PetN. The complex functions as a dimer.

It localises to the plastid. The protein resides in the chloroplast thylakoid membrane. In terms of biological role, component of the cytochrome b6-f complex, which mediates electron transfer between photosystem II (PSII) and photosystem I (PSI), cyclic electron flow around PSI, and state transitions. PetL is important for photoautotrophic growth as well as for electron transfer efficiency and stability of the cytochrome b6-f complex. The sequence is that of Cytochrome b6-f complex subunit 6 from Daucus carota (Wild carrot).